We begin with the raw amino-acid sequence, 317 residues long: Probable methyltransferase tdiE (317 aa).

The protein belongs to the methyltransferase superfamily. LaeA methyltransferase family.

Its pathway is secondary metabolite biosynthesis. Functionally, probable methyltransferase; part of the gene cluster that mediates the biosynthesis of terrequinone A, an antitumor agent. The first step in the biosynthetic pathway for terrequinone A is formation of indole pyruvic acid (IPA) from L-tryptophan by the aminotransferase tdiD. The nonribosomal peptide synthase tdiA then immediately converts unstable IPA to didemethylasterriquinone D (DDAQ D), via condensation of 2 IPA molecules. The symmetric connectivity of the 2 IPA molecules is thought to arise by head-to-tail dual Claisen condensations facilitated by the TE domain. TdiB then catalyzes reverse prenylation by transferring dimethylallyl diphosphate to carbon atom 2' of DDAQ D, to yield asterriquinone C-1. Finally, tdiC and tdiE enzymes robustly convert asterriquinone C-1 to terrequinone A via a transformation involving regular prenylation at carbon atom 5, which requires elimination of the hydroxy group on C-5. This chain is Probable methyltransferase tdiE, found in Emericella nidulans (strain FGSC A4 / ATCC 38163 / CBS 112.46 / NRRL 194 / M139) (Aspergillus nidulans).